The sequence spans 347 residues: NADH-ubiquinone oxidoreductase chain 2 (347 aa).

The next 10 membrane-spanning stretches (helical) occupy residues 4–21 (LILSMIMATIILGTLIVM), 26–45 (WLMVWIGFEMNMLAILPVLM), 59–79 (YFLTQATASMLLMLAITINLI), 96–116 (IIMTLALAMKLGLSPFHFWVP), 122–142 (IQLSSGLILLTWQKLAPMSIL), 148–168 (AINMDLLLSMSLMSVAIGGWG), 201–221 (ALLNLIIYILLTTTTFMTFML), 242–262 (TTILILMLSLGGLPPLSGFLP), 274–294 (DSIITPTIMAITALLNLYFYM), and 326–346 (LPPLIVLSTLILPMSPMLMLL).

The protein belongs to the complex I subunit 2 family. In terms of assembly, core subunit of respiratory chain NADH dehydrogenase (Complex I) which is composed of 45 different subunits. Interacts with TMEM242.

It localises to the mitochondrion inner membrane. The catalysed reaction is a ubiquinone + NADH + 5 H(+)(in) = a ubiquinol + NAD(+) + 4 H(+)(out). In terms of biological role, core subunit of the mitochondrial membrane respiratory chain NADH dehydrogenase (Complex I) which catalyzes electron transfer from NADH through the respiratory chain, using ubiquinone as an electron acceptor. Essential for the catalytic activity and assembly of complex I. The chain is NADH-ubiquinone oxidoreductase chain 2 from Syconycteris australis (Southern blossom bat).